The following is a 615-amino-acid chain: Putative DNA ligase 205R (615 aa).

The active-site N6-AMP-lysine intermediate is K101.

The protein belongs to the NAD-dependent DNA ligase family.

The enzyme catalyses NAD(+) + (deoxyribonucleotide)n-3'-hydroxyl + 5'-phospho-(deoxyribonucleotide)m = (deoxyribonucleotide)n+m + AMP + beta-nicotinamide D-nucleotide.. Its function is as follows. Catalyzes the formation of phosphodiester linkages between 5'-phosphoryl and 3'-hydroxyl groups in double-stranded DNA using NAD as a coenzyme and as the energy source for the reaction. This Invertebrate iridescent virus 6 (IIV-6) protein is Putative DNA ligase 205R.